A 906-amino-acid chain; its full sequence is Protein translocase subunit SecA (906 aa).

ATP is bound by residues Gln-86, 104-108 (GEGKT), and Asp-499. Residues 865–885 (VSRIDPKDRNPEDPTSWGRVS) form a disordered region. The Zn(2+) site is built by Cys-890, Cys-892, Cys-901, and His-902.

It belongs to the SecA family. In terms of assembly, monomer and homodimer. Part of the essential Sec protein translocation apparatus which comprises SecA, SecYEG and auxiliary proteins SecDF-YajC and YidC. Zn(2+) is required as a cofactor.

It localises to the cell inner membrane. The protein resides in the cytoplasm. It catalyses the reaction ATP + H2O + cellular proteinSide 1 = ADP + phosphate + cellular proteinSide 2.. Part of the Sec protein translocase complex. Interacts with the SecYEG preprotein conducting channel. Has a central role in coupling the hydrolysis of ATP to the transfer of proteins into and across the cell membrane, serving both as a receptor for the preprotein-SecB complex and as an ATP-driven molecular motor driving the stepwise translocation of polypeptide chains across the membrane. This chain is Protein translocase subunit SecA, found in Rickettsia canadensis (strain McKiel).